The primary structure comprises 662 residues: Rap guanine nucleotide exchange factor-like 1 (662 aa).

The tract at residues 1–149 is disordered; that stretch reads MKPLEKFLKK…PPWAPLGAPE (149 aa). Gly residues predominate over residues 20–48; sequence VTGGPGGGPGCCGGPGGGGGPGGGGGPAG. Low complexity-rich tracts occupy residues 49 to 65 and 116 to 133; these read GLRPLQRRQSVSRLLLP and SGVPLRSPSSYSSDELSP. The Ras-GEF domain maps to 424-660; that stretch reads EPEDVANHLT…FELSYKLEAN (237 aa).

In terms of biological role, probable guanine nucleotide exchange factor (GEF). This Mus musculus (Mouse) protein is Rap guanine nucleotide exchange factor-like 1 (Rapgefl1).